A 209-amino-acid chain; its full sequence is Uracil phosphoribosyltransferase (209 aa).

Residues R79, R104, and 131–139 (DPMLATGGS) contribute to the 5-phospho-alpha-D-ribose 1-diphosphate site. Residues I194 and 199–201 (GDA) each bind uracil. D200 contributes to the 5-phospho-alpha-D-ribose 1-diphosphate binding site.

This sequence belongs to the UPRTase family. Requires Mg(2+) as cofactor.

It catalyses the reaction UMP + diphosphate = 5-phospho-alpha-D-ribose 1-diphosphate + uracil. It functions in the pathway pyrimidine metabolism; UMP biosynthesis via salvage pathway; UMP from uracil: step 1/1. With respect to regulation, allosterically activated by GTP. Functionally, catalyzes the conversion of uracil and 5-phospho-alpha-D-ribose 1-diphosphate (PRPP) to UMP and diphosphate. The chain is Uracil phosphoribosyltransferase from Streptococcus agalactiae serotype III (strain NEM316).